We begin with the raw amino-acid sequence, 513 residues long: Histidine ammonia-lyase (513 aa).

The segment at residues 143–145 is a cross-link (5-imidazolinone (Ala-Gly)); it reads ASG. 2,3-didehydroalanine (Ser) is present on Ser-144.

This sequence belongs to the PAL/histidase family. Contains an active site 4-methylidene-imidazol-5-one (MIO), which is formed autocatalytically by cyclization and dehydration of residues Ala-Ser-Gly.

The protein localises to the cytoplasm. It catalyses the reaction L-histidine = trans-urocanate + NH4(+). Its pathway is amino-acid degradation; L-histidine degradation into L-glutamate; N-formimidoyl-L-glutamate from L-histidine: step 1/3. This is Histidine ammonia-lyase from Xanthomonas axonopodis pv. citri (strain 306).